We begin with the raw amino-acid sequence, 622 residues long: Basic helix-loop-helix ARNT-like protein 2 (622 aa).

Low complexity predominate over residues 1-10 (MAEAGVGSAE). 2 disordered regions span residues 1-29 (MAEAGVGSAEGAEEERRAVEENFPVDGNS) and 41-86 (PITK…EDEE). Residues 45–54 (PATTSFNNSV) are compositionally biased toward polar residues. Residues 67 to 76 (DNQDTVEVDG) show a composition bias toward acidic residues. Over residues 77 to 86 (DPQKRNEDEE) the composition is skewed to basic and acidic residues. Residues 92-145 (DFREAHSQTEKRRRDKMNNLIEELSAMIPQCNPMARKLDKLTVLRMAVQHLKSL) form the bHLH domain. PAS domains follow at residues 163-235 (KDDE…DVSP) and 342-412 (VPQK…LQNK). In terms of domain architecture, PAC spans 417–460 (TNSYKFRAKDGSFITLKSQWFSFMNPWTKELEYIVSNNTVVLGH).

Component of the circadian core oscillator, which includes the CRY proteins, CLOCK, or NPAS2, BMAL1 or BMAL2, CSNK1D and/or CSNK1E, TIMELESS and the PER proteins. Interacts directly with CLOCK to form the BMAL2-CLOCK transactivator. Can form heterodimers or homodimers which interact directly with CLOCK to form the transcription activator. Expressed in the pineal gland.

The protein resides in the nucleus. In terms of biological role, transcriptional activator which forms a core component of the circadian clock. The circadian clock, an internal time-keeping system, regulates various physiological processes through the generation of approximately 24 hour circadian rhythms in gene expression, which are translated into rhythms in metabolism and behavior. It is derived from the Latin roots 'circa' (about) and 'diem' (day) and acts as an important regulator of a wide array of physiological functions including metabolism, sleep, body temperature, blood pressure, endocrine, immune, cardiovascular, and renal function. Consists of two major components: the central clock, residing in the suprachiasmatic nucleus (SCN) of the brain, and the peripheral clocks that are present in nearly every tissue and organ system. Both the central and peripheral clocks can be reset by environmental cues, also known as Zeitgebers (German for 'timegivers'). The predominant Zeitgeber for the central clock is light, which is sensed by retina and signals directly to the SCN. The central clock entrains the peripheral clocks through neuronal and hormonal signals, body temperature and feeding-related cues, aligning all clocks with the external light/dark cycle. Circadian rhythms allow an organism to achieve temporal homeostasis with its environment at the molecular level by regulating gene expression to create a peak of protein expression once every 24 hours to control when a particular physiological process is most active with respect to the solar day. Transcription and translation of core clock components (CLOCK, NPAS2, BMAL1, BMAL2, PER1, PER2, PER3, CRY1 and CRY2) plays a critical role in rhythm generation, whereas delays imposed by post-translational modifications (PTMs) are important for determining the period (tau) of the rhythms (tau refers to the period of a rhythm and is the length, in time, of one complete cycle). A diurnal rhythm is synchronized with the day/night cycle, while the ultradian and infradian rhythms have a period shorter and longer than 24 hours, respectively. Disruptions in the circadian rhythms contribute to the pathology of cardiovascular diseases, cancer, metabolic syndromes and aging. A transcription/translation feedback loop (TTFL) forms the core of the molecular circadian clock mechanism. Transcription factors, CLOCK or NPAS2 and BMAL1 or BMAL2, form the positive limb of the feedback loop, act in the form of a heterodimer and activate the transcription of core clock genes and clock-controlled genes (involved in key metabolic processes), harboring E-box elements (5'-CACGTG-3') within their promoters. The core clock genes: PER1/2/3 and CRY1/2 which are transcriptional repressors form the negative limb of the feedback loop and interact with the CLOCK|NPAS2-BMAL1|BMAL2 heterodimer inhibiting its activity and thereby negatively regulating their own expression. This heterodimer also activates nuclear receptors NR1D1/2 and RORA/B/G, which form a second feedback loop and which activate and repress BMAL1 transcription, respectively. The preferred binding motif for the CLOCK-BMAL1 heterodimer is 5'-CACGTGA-3', which contains a flanking adenine nucleotide at the 3-prime end of the canonical 6-nucleotide E-box sequence. CLOCK specifically binds to the half-site 5'-CAC-3', while BMAL1 binds to the half-site 5'-GTGA-3'. This is Basic helix-loop-helix ARNT-like protein 2 (BMAL2) from Gallus gallus (Chicken).